Consider the following 206-residue polypeptide: MPEVQPSALPKPAPRLGRDAAVASICGFVVALMVGASFAAVPFYDWFCRTTGFNGTTQVAGSAPSSEPLARKVSVRFDSNINGLPWKFEPEQREVEVAIGQVVTVYYSVTNTSKRATTGQAAYNVTPLTVGSYFTKINCFCFTEQTLAAGETREMPVVFYVDPAFAADNENDTVKNITLSYTFYPVREPPPKPLASGEPDQRKGNL.

Residues 1–17 (MPEVQPSALPKPAPRLG) are Cytoplasmic-facing. Residues 18 to 40 (RDAAVASICGFVVALMVGASFAA) form a helical; Signal-anchor for type II membrane protein membrane-spanning segment. Over 41-206 (VPFYDWFCRT…GEPDQRKGNL (166 aa)) the chain is Periplasmic.

This sequence belongs to the COX11/CtaG family.

It is found in the cell inner membrane. In terms of biological role, exerts its effect at some terminal stage of cytochrome c oxidase synthesis, probably by being involved in the insertion of the copper B into subunit I. The protein is Cytochrome c oxidase assembly protein CtaG of Rhodopseudomonas palustris (strain BisB5).